The primary structure comprises 711 residues: Hepatocyte growth factor-like protein (711 aa).

The signal sequence occupies residues 1–18 (MGWLPLLLLLTQCLGVPG). The PAN domain maps to 21–105 (SPLNDFQVLR…GRCDLFQKKD (85 aa)). Cystine bridges form between C56-C78, C60-C66, C110-C186, C131-C169, C157-C181, C191-C268, C194-C324, C212-C251, C240-C263, C283-C361, C304-C343, C332-C355, C370-C448, C391-C431, C419-C443, C468-C588, C507-C523, C602-C667, C632-C646, and C657-C685. An N-linked (GlcNAc...) asparagine glycan is attached at N72. Kringle domains lie at 110–186 (CIMN…IKSC), 191–268 (CVWC…LPRC), 283–361 (CFRG…IRRC), and 370–448 (CYHG…LRRC). A glycan (N-linked (GlcNAc...) asparagine) is linked at N296. The region spanning 484 to 709 (VVGGHPGNSP…FVDWIHKVMR (226 aa)) is the Peptidase S1 domain. N615 is a glycosylation site (N-linked (GlcNAc...) asparagine).

This sequence belongs to the peptidase S1 family. Plasminogen subfamily. In terms of assembly, dimer of an alpha chain and a beta chain linked by a disulfide bond. Interacts (via beta chain) with MST1R (via SEMA domain). Post-translationally, cleaved after Arg-483, probably by HPN/Hepsin, to yield the active form consisting of two disulfide-linked chains.

Its subcellular location is the secreted. The protein is Hepatocyte growth factor-like protein (MST1) of Homo sapiens (Human).